The primary structure comprises 274 residues: Ubiquinone biosynthesis protein COQ4 homolog, mitochondrial (274 aa).

The N-terminal 20 residues, Met-1–Phe-20, are a transit peptide targeting the mitochondrion. Positions Asn-13–Lys-40 are disordered. Residues Thr-22–Asp-36 are compositionally biased toward polar residues. Positions 177, 178, 181, and 193 each coordinate Zn(2+).

It belongs to the COQ4 family. Component of a multi-subunit COQ enzyme complex. Zn(2+) serves as cofactor.

The protein localises to the mitochondrion inner membrane. It catalyses the reaction a 4-hydroxy-3-methoxy-5-(all-trans-polyprenyl)benzoate + H(+) = a 2-methoxy-6-(all-trans-polyprenyl)phenol + CO2. Its pathway is cofactor biosynthesis; ubiquinone biosynthesis. Its function is as follows. Lyase that catalyzes the C1-decarboxylation of 4-hydroxy-3-methoxy-5-(all-trans-polyprenyl)benzoic acid into 2-methoxy-6-(all-trans-polyprenyl)phenol during ubiquinone biosynthesis. The chain is Ubiquinone biosynthesis protein COQ4 homolog, mitochondrial from Aedes aegypti (Yellowfever mosquito).